We begin with the raw amino-acid sequence, 513 residues long: Nitrogenase molybdenum-iron protein beta chain (513 aa).

3 residues coordinate [8Fe-7S] cluster: C70, C95, and C153.

It belongs to the NifD/NifK/NifE/NifN family. As to quaternary structure, tetramer of two alpha and two beta chains. Forms complex with the iron protein (nitrogenase component 2). The cofactor is [8Fe-7S] cluster.

It carries out the reaction N2 + 8 reduced [2Fe-2S]-[ferredoxin] + 16 ATP + 16 H2O = H2 + 8 oxidized [2Fe-2S]-[ferredoxin] + 2 NH4(+) + 16 ADP + 16 phosphate + 6 H(+). Functionally, this molybdenum-iron protein is part of the nitrogenase complex that catalyzes the key enzymatic reactions in nitrogen fixation. In Sinorhizobium fredii (strain NBRC 101917 / NGR234), this protein is Nitrogenase molybdenum-iron protein beta chain (nifK1).